The primary structure comprises 417 residues: Probable tubulin polyglutamylase ttll-9 (417 aa).

Residues 23–372 enclose the TTL domain; that stretch reads QRKKKILFKC…EKKLIGNENE (350 aa). ATP-binding positions include 188–191, lysine 201, and aspartate 203; that span reads QCYV.

It belongs to the tubulin--tyrosine ligase family. In terms of tissue distribution, expressed in head sensory neurons.

Functionally, polyglutamylase that forms polyglutamate side chains on tubulin. Acts when complexed with other proteins. Appears to be dispensable for polar spindle formation in dividing embryonic cells, for cilia-dependent osmotic avoidance and for male mating behavior. Probably by regulating microtubule stability via the glutamylation of tubulin, regulates PLM axon developmental growth. This chain is Probable tubulin polyglutamylase ttll-9, found in Caenorhabditis elegans.